A 272-amino-acid chain; its full sequence is Cell division protein FtsQ (272 aa).

The Cytoplasmic portion of the chain corresponds to 1–43 (MEYNPPNTRERIAARRQRLRQPSSEPAIPGWRRRFIDGLQSGR). Residues 44–64 (IVSGAVFVVSCLALFYVLFSS) traverse the membrane as a helical segment. The Extracellular segment spans residues 65–272 (QFRVQTVEVV…FYQNRTDGRS (208 aa)). A POTRA domain is found at 66 to 133 (FRVQTVEVVG…DRARIVIVER (68 aa)).

This sequence belongs to the FtsQ/DivIB family. FtsQ subfamily.

It is found in the cell membrane. Its function is as follows. Essential cell division protein. This is Cell division protein FtsQ from Chloroflexus aggregans (strain MD-66 / DSM 9485).